The chain runs to 92 residues: Probable Fe(2+)-trafficking protein (92 aa).

It belongs to the Fe(2+)-trafficking protein family.

Its function is as follows. Could be a mediator in iron transactions between iron acquisition and iron-requiring processes, such as synthesis and/or repair of Fe-S clusters in biosynthetic enzymes. The protein is Probable Fe(2+)-trafficking protein of Shewanella baltica (strain OS223).